A 454-amino-acid polypeptide reads, in one-letter code: tRNA modification GTPase MnmE (454 aa).

Residues Arg-23, Glu-80, and Lys-120 each coordinate (6S)-5-formyl-5,6,7,8-tetrahydrofolate. Residues 216-377 (GMKVVIAGRP…LREHLKQSMG (162 aa)) enclose the TrmE-type G domain. Position 226 (Asn-226) interacts with K(+). GTP-binding positions include 226–231 (NAGKSS), 245–251 (TDIAGTT), and 270–273 (DTAG). Ser-230 contacts Mg(2+). 3 residues coordinate K(+): Thr-245, Ile-247, and Thr-250. Thr-251 serves as a coordination point for Mg(2+). Lys-454 contacts (6S)-5-formyl-5,6,7,8-tetrahydrofolate.

The protein belongs to the TRAFAC class TrmE-Era-EngA-EngB-Septin-like GTPase superfamily. TrmE GTPase family. In terms of assembly, homodimer. Heterotetramer of two MnmE and two MnmG subunits. Requires K(+) as cofactor.

Its subcellular location is the cytoplasm. In terms of biological role, exhibits a very high intrinsic GTPase hydrolysis rate. Involved in the addition of a carboxymethylaminomethyl (cmnm) group at the wobble position (U34) of certain tRNAs, forming tRNA-cmnm(5)s(2)U34. This chain is tRNA modification GTPase MnmE, found in Mannheimia succiniciproducens (strain KCTC 0769BP / MBEL55E).